The primary structure comprises 898 residues: Vacuolar protein sorting-associated protein 41 homolog (898 aa).

Basic and acidic residues predominate over residues M1 to E10. The disordered stretch occupies residues M1–E35. The CHCR repeat unit spans residues L614–Q756. The segment at C835–S890 adopts an RING-type; atypical zinc-finger fold.

This sequence belongs to the VPS41 family. As to quaternary structure, probable component of the homotypic fusion and vacuole protein sorting (HOPS) complex consisting of the core class C Vps proteins vps-11, vps-16, vps-18, and which further associates with vps-33.1, vps-39 and vps-41.

It localises to the endosome membrane. Its subcellular location is the late endosome. The protein resides in the lysosome. The protein localises to the golgi apparatus. It is found in the trans-Golgi network. It localises to the early endosome. Its subcellular location is the cytoplasmic vesicle. The protein resides in the clathrin-coated vesicle. Plays a role in vesicle-mediated protein trafficking to lysosomal compartments including the endocytic membrane transport pathways. Believed to act in part as a core component of the putative HOPS endosomal tethering complex which is proposed to be involved in the rab-5-to-rab-7 endosome conversion probably implicating sand-1, and via binding SNAREs and SNARE complexes to mediate tethering and docking events during SNARE-mediated membrane fusion. The HOPS complex is proposed to be recruited to rab-7 on the late endosomal membrane and to regulate late endocytic, phagocytic and autophagic traffic towards lysosomes. Within the HOPS complex, contributes to the normal development of gut granules in the adult intestine. May mediate the tethering of autophagosomes with lysosomes. Has a role in the negative regulation of apoptosis. Required for uptake of exogenous dsRNA which is used in experimental RNA silencing. This Caenorhabditis briggsae protein is Vacuolar protein sorting-associated protein 41 homolog.